Reading from the N-terminus, the 187-residue chain is MEGVESKEREVMVAKPVAVGVSDLLLRLLAFTVTLVAAIVIAVDKQTKVVPIQLSDSLPPLDVPLTAKWHQMSAIVYFLVTNAIACTYAVLSLLLALVNRGKSKGLWTLIAVLDAFMVALLFSGNGAAAAVGVLGYKGNSHVNWNKVCNVFGKFCDQMAASIGVSLIGSLAFLLLVIIPGVRLHRRN.

Residues 1 to 22 are Cytoplasmic-facing; that stretch reads MEGVESKEREVMVAKPVAVGVS. A helical transmembrane segment spans residues 23-43; it reads DLLLRLLAFTVTLVAAIVIAV. The Extracellular portion of the chain corresponds to 44–77; the sequence is DKQTKVVPIQLSDSLPPLDVPLTAKWHQMSAIVY. A helical membrane pass occupies residues 78 to 98; sequence FLVTNAIACTYAVLSLLLALV. Over 99 to 114 the chain is Cytoplasmic; that stretch reads NRGKSKGLWTLIAVLD. A helical membrane pass occupies residues 115–135; it reads AFMVALLFSGNGAAAAVGVLG. The Extracellular segment spans residues 136-157; sequence YKGNSHVNWNKVCNVFGKFCDQ. The helical transmembrane segment at 158–178 threads the bilayer; that stretch reads MAASIGVSLIGSLAFLLLVII. At 179-187 the chain is on the cytoplasmic side; that stretch reads PGVRLHRRN.

Belongs to the Casparian strip membrane proteins (CASP) family. In terms of assembly, homodimer and heterodimers.

The protein localises to the cell membrane. The sequence is that of CASP-like protein 1E2 from Glycine max (Soybean).